We begin with the raw amino-acid sequence, 435 residues long: D-amino acid dehydrogenase (435 aa).

3–17 (VLILGSGVIGTTSAW) provides a ligand contact to FAD.

It belongs to the DadA oxidoreductase family. FAD serves as cofactor.

The catalysed reaction is a D-alpha-amino acid + A + H2O = a 2-oxocarboxylate + AH2 + NH4(+). Its pathway is amino-acid degradation; D-alanine degradation; NH(3) and pyruvate from D-alanine: step 1/1. In terms of biological role, oxidative deamination of D-amino acids. This Xylella fastidiosa (strain M23) protein is D-amino acid dehydrogenase.